A 771-amino-acid polypeptide reads, in one-letter code: Dol-P-Glc:Glc(2)Man(9)GlcNAc(2)-PP-Dol alpha-1,2-glucosyltransferase (771 aa).

Transmembrane regions (helical) follow at residues 45–65 (FITA…LALV), 160–180 (VSFY…IFFF), 182–202 (GLYY…WNHL), 221–241 (VVLG…VVVY), 293–313 (VDMA…IAAL), 326–346 (HITI…VVLG), and 357–377 (LPQM…LLIP). The disordered stretch occupies residues 392-449 (TPTPSHTTTKDPGRSSWRFTKPSITSKKSSTTKPPQRSGPTPASSSSSSSSFSPDTNS). 2 stretches are compositionally biased toward low complexity: residues 411–426 (TKPS…TKPP) and 435–449 (SSSS…DTNS). Residue N448 is glycosylated (N-linked (GlcNAc...) asparagine). 2 consecutive transmembrane segments (helical) span residues 469–489 (PFYL…NTII) and 503–525 (YIFR…AYTL). The span at 584–593 (QKNIKDKQKE) shows a compositional bias: basic and acidic residues. Residues 584–605 (QKNIKDKQKEVEEEEEEEEKED) form a disordered region. Positions 594–604 (VEEEEEEEEKE) are enriched in acidic residues. 2 consecutive transmembrane segments (helical) span residues 631–651 (TSTV…APLV) and 656–676 (FILP…SSSL). Positions 682–708 (SSSFASSTTESGNGDGNDAATAARQQQ) are disordered. A helical membrane pass occupies residues 728–748 (LALETVWFLAINIGTMYMFLF).

It belongs to the ALG10 glucosyltransferase family.

The protein resides in the endoplasmic reticulum membrane. The enzyme catalyses an alpha-D-Glc-(1-&gt;3)-alpha-D-Glc-(1-&gt;3)-alpha-D-Man-(1-&gt;2)-alpha-D-Man-(1-&gt;2)-alpha-D-Man-(1-&gt;3)-[alpha-D-Man-(1-&gt;2)-alpha-D-Man-(1-&gt;3)-[alpha-D-Man-(1-&gt;2)-alpha-D-Man-(1-&gt;6)]-alpha-D-Man-(1-&gt;6)]-beta-D-Man-(1-&gt;4)-beta-D-GlcNAc-(1-&gt;4)-alpha-D-GlcNAc-diphospho-di-trans,poly-cis-dolichol + a di-trans,poly-cis-dolichyl beta-D-glucosyl phosphate = a alpha-D-Glc-(1-&gt;2)-alpha-D-Glc-(1-&gt;3)-alpha-D-Glc-(1-&gt;3)-alpha-D-Man-(1-&gt;2)-alpha-D-Man-(1-&gt;2)-alpha-D-Man-(1-&gt;3)-[alpha-D-Man-(1-&gt;2)-alpha-D-Man-(1-&gt;3)-[alpha-D-Man-(1-&gt;2)-alpha-D-Man-(1-&gt;6)]-alpha-D-Man-(1-&gt;6)]-beta-D-Man-(1-&gt;4)-beta-D-GlcNAc-(1-&gt;4)-alpha-D-GlcNAc-diphospho-di-trans,poly-cis-dolichol + a di-trans,poly-cis-dolichyl phosphate + H(+). The protein operates within protein modification; protein glycosylation. Functionally, dol-P-Glc:Glc(2)Man(9)GlcNAc(2)-PP-Dol alpha-1,2-glucosyltransferase that operates in the biosynthetic pathway of dolichol-linked oligosaccharides, the glycan precursors employed in protein asparagine (N)-glycosylation. The assembly of dolichol-linked oligosaccharides begins on the cytosolic side of the endoplasmic reticulum membrane and finishes in its lumen. The sequential addition of sugars to dolichol pyrophosphate produces dolichol-linked oligosaccharides containing fourteen sugars, including two GlcNAcs, nine mannoses and three glucoses. Once assembled, the oligosaccharide is transferred from the lipid to nascent proteins by oligosaccharyltransferases. In the lumen of the endoplasmic reticulum, adds the third and last glucose residue from dolichyl phosphate glucose (Dol-P-Glc) onto the lipid-linked oligosaccharide intermediate Glc(2)Man(9)GlcNAc(2)-PP-Dol to produce Glc(3)Man(9)GlcNAc(2)-PP-Dol. The sequence is that of Dol-P-Glc:Glc(2)Man(9)GlcNAc(2)-PP-Dol alpha-1,2-glucosyltransferase (alg-10) from Neurospora crassa (strain ATCC 24698 / 74-OR23-1A / CBS 708.71 / DSM 1257 / FGSC 987).